A 177-amino-acid chain; its full sequence is Putative HTH-type transcriptional regulator YvaV (177 aa).

The segment at residues 49-73 is a DNA-binding region (H-T-H motif); it reads LTELSEATGMSKTRMSQVVREMLDA.

This sequence belongs to the GbsR family.

This is Putative HTH-type transcriptional regulator YvaV (yvaV) from Bacillus subtilis (strain 168).